The following is a 155-amino-acid chain: SsrA-binding protein (155 aa).

Belongs to the SmpB family.

The protein localises to the cytoplasm. Its function is as follows. Required for rescue of stalled ribosomes mediated by trans-translation. Binds to transfer-messenger RNA (tmRNA), required for stable association of tmRNA with ribosomes. tmRNA and SmpB together mimic tRNA shape, replacing the anticodon stem-loop with SmpB. tmRNA is encoded by the ssrA gene; the 2 termini fold to resemble tRNA(Ala) and it encodes a 'tag peptide', a short internal open reading frame. During trans-translation Ala-aminoacylated tmRNA acts like a tRNA, entering the A-site of stalled ribosomes, displacing the stalled mRNA. The ribosome then switches to translate the ORF on the tmRNA; the nascent peptide is terminated with the 'tag peptide' encoded by the tmRNA and targeted for degradation. The ribosome is freed to recommence translation, which seems to be the essential function of trans-translation. This Gloeothece citriformis (strain PCC 7424) (Cyanothece sp. (strain PCC 7424)) protein is SsrA-binding protein.